The primary structure comprises 250 residues: Ubiquinone/menaquinone biosynthesis C-methyltransferase UbiE (250 aa).

S-adenosyl-L-methionine is bound by residues Thr-73, Asp-94, and Asp-122–Ala-123.

It belongs to the class I-like SAM-binding methyltransferase superfamily. MenG/UbiE family.

It catalyses the reaction a 2-demethylmenaquinol + S-adenosyl-L-methionine = a menaquinol + S-adenosyl-L-homocysteine + H(+). The enzyme catalyses a 2-methoxy-6-(all-trans-polyprenyl)benzene-1,4-diol + S-adenosyl-L-methionine = a 5-methoxy-2-methyl-3-(all-trans-polyprenyl)benzene-1,4-diol + S-adenosyl-L-homocysteine + H(+). The protein operates within quinol/quinone metabolism; menaquinone biosynthesis; menaquinol from 1,4-dihydroxy-2-naphthoate: step 2/2. Its pathway is cofactor biosynthesis; ubiquinone biosynthesis. In terms of biological role, methyltransferase required for the conversion of demethylmenaquinol (DMKH2) to menaquinol (MKH2) and the conversion of 2-polyprenyl-6-methoxy-1,4-benzoquinol (DDMQH2) to 2-polyprenyl-3-methyl-6-methoxy-1,4-benzoquinol (DMQH2). This Coxiella burnetii (strain CbuK_Q154) (Coxiella burnetii (strain Q154)) protein is Ubiquinone/menaquinone biosynthesis C-methyltransferase UbiE.